We begin with the raw amino-acid sequence, 158 residues long: Transcription elongation factor GreA (158 aa).

The protein belongs to the GreA/GreB family.

Functionally, necessary for efficient RNA polymerase transcription elongation past template-encoded arresting sites. The arresting sites in DNA have the property of trapping a certain fraction of elongating RNA polymerases that pass through, resulting in locked ternary complexes. Cleavage of the nascent transcript by cleavage factors such as GreA or GreB allows the resumption of elongation from the new 3'terminus. GreA releases sequences of 2 to 3 nucleotides. The polypeptide is Transcription elongation factor GreA (Agrobacterium fabrum (strain C58 / ATCC 33970) (Agrobacterium tumefaciens (strain C58))).